Consider the following 240-residue polypeptide: MQPYLKKNTHATDDPKASPLKEGSPDNPESPLISADIVLPEDEFASYQSYLLYEIVRAKYIMINFLLFVVTILATLTDIWFSGVLSPAMVIRICLGGSMVVLQIWSFSRPISNETFRTKLLLEVITHRPSIAGKEWKTITYNMNQYLFKAGLWKTPYHFFCEHQCYEFFKDLIKGKYPDVQWDTANTQPFISVPENQAATQNSDVEPTVKWCLFKAAEIQAHAVREYWQSQYPDVGIPAI.

A disordered region spans residues 1–29 (MQPYLKKNTHATDDPKASPLKEGSPDNPE). 2 helical membrane-spanning segments follow: residues 61–81 (IMIN…DIWF) and 84–104 (VLSP…VLQI).

It belongs to the DUP/COS family.

It localises to the membrane. The polypeptide is DUP240 protein DFP1 (Saccharomyces cerevisiae (Baker's yeast)).